The primary structure comprises 321 residues: MRFNLAERILNQDVLSKDEALALFEDETIDTFELLNEAYIIRKHFFGKKVKLNMILNAKSGICSEDCGYCGQSVKMKEKQRYALVEPDKIKAGAQVATENHIGTYCIVMSGRGPTNREVDHICETVHDIKVLHPQLKICACLGLTNEEQAEKLKEAGVDRYNHNLNTSERYHNEVVTTHTYEDRVRTVEIMKANHISPCSGVICGMGETNEDIIDMAFALREIDADSIPINFLHPIKGTKFGGLDLLSPMKCLRIIAMFRLINPSKEIRIAGGREVNLRSLQAIALKAANSIFVGDYLITGGQPNELDYQMIEDLGFEIDG.

A Radical SAM core domain is found at 45–271 (FFGKKVKLNM…INPSKEIRIA (227 aa)). Residues Cys-63, Cys-67, and Cys-70 each coordinate [4Fe-4S] cluster. Residues Cys-106, Cys-139, Cys-199, and Arg-269 each coordinate [2Fe-2S] cluster.

It belongs to the radical SAM superfamily. Biotin synthase family. As to quaternary structure, homodimer. [4Fe-4S] cluster is required as a cofactor. The cofactor is [2Fe-2S] cluster.

The enzyme catalyses (4R,5S)-dethiobiotin + (sulfur carrier)-SH + 2 reduced [2Fe-2S]-[ferredoxin] + 2 S-adenosyl-L-methionine = (sulfur carrier)-H + biotin + 2 5'-deoxyadenosine + 2 L-methionine + 2 oxidized [2Fe-2S]-[ferredoxin]. The protein operates within cofactor biosynthesis; biotin biosynthesis; biotin from 7,8-diaminononanoate: step 2/2. Its function is as follows. Catalyzes the conversion of dethiobiotin (DTB) to biotin by the insertion of a sulfur atom into dethiobiotin via a radical-based mechanism. This chain is Biotin synthase, found in Staphylococcus haemolyticus (strain JCSC1435).